The chain runs to 1353 residues: Protein timeless homolog (1353 aa).

3 disordered regions span residues 798-825 (VAED…EEEV), 1150-1291 (KPTR…LEED), and 1306-1335 (GGSI…DPFT). Acidic residues predominate over residues 802-825 (RAEDPDEEDPAEPYDSEQEEEEEV). Basic and acidic residues-rich tracts occupy residues 1150-1160 (KPTRQVERHLE) and 1168-1182 (ERSK…KFDD). Composition is skewed to acidic residues over residues 1183 to 1206 (FLND…EEEE) and 1217 to 1226 (DSEDEEEHIE). The span at 1227-1239 (QEEAQKKLEKVAE) shows a compositional bias: basic and acidic residues. 3 stretches are compositionally biased toward acidic residues: residues 1261-1273 (DSSD…DSAE), 1282-1291 (AEDDSDLEED), and 1323-1332 (EEREDDDDED).

This sequence belongs to the timeless family. In terms of assembly, associates with the cohesin complex. Interacts with smc-1, smc-3, scc-1 and scc-3.

The protein localises to the nucleus. Its function is as follows. Plays an important role in chromosome cohesion during both mitosis and meiosis. In prophase of meiosis, it is involved in the formation of the synaptonemal complex (SC) and specifically, in the diplotene and diakinesis phases of prophase, it stabilizes the association of homologous chromosomes during synapsis and sister chromatid cohesion. It regulates cohesin subunits to promote meiotic chromosome cohesion and localizes non-SMC (structural maintenance of chromosome) cohesin subunits to chromatin prior to or during pre-meiotic S phase. Implicated in influencing either the stability or loading of meiotic-specific cohesin subunit, rec8. Controls cell cycle exit and cell fusion to prevent the premature differentiation into adult cells. Specifically, regulates hypodermal seam cell identity. The sequence is that of Protein timeless homolog from Caenorhabditis elegans.